A 386-amino-acid polypeptide reads, in one-letter code: Glutamate 5-kinase (386 aa).

Lys-28 lines the ATP pocket. Ser-68, Asp-155, and Asn-167 together coordinate substrate. 187–188 (TD) contacts ATP. The PUA domain occupies 294-372 (RGRLVLDDGA…EKIESILGYI (79 aa)).

Belongs to the glutamate 5-kinase family.

The protein localises to the cytoplasm. It carries out the reaction L-glutamate + ATP = L-glutamyl 5-phosphate + ADP. The protein operates within amino-acid biosynthesis; L-proline biosynthesis; L-glutamate 5-semialdehyde from L-glutamate: step 1/2. Its function is as follows. Catalyzes the transfer of a phosphate group to glutamate to form L-glutamate 5-phosphate. The chain is Glutamate 5-kinase from Hahella chejuensis (strain KCTC 2396).